The chain runs to 636 residues: DNA mismatch repair protein MutL (636 aa).

Basic and acidic residues predominate over residues 332-344; sequence HAGEQGDSLRTDI. Disordered regions lie at residues 332–360 and 417–443; these read HAGEQGDSLRTDIADAPEQPGATATPADN and ASAPADAAPAQASEPAAAPQADDSDDA. Residues 417-437 show a composition bias toward low complexity; sequence ASAPADAAPAQASEPAAAPQA.

Belongs to the DNA mismatch repair MutL/HexB family.

In terms of biological role, this protein is involved in the repair of mismatches in DNA. It is required for dam-dependent methyl-directed DNA mismatch repair. May act as a 'molecular matchmaker', a protein that promotes the formation of a stable complex between two or more DNA-binding proteins in an ATP-dependent manner without itself being part of a final effector complex. This is DNA mismatch repair protein MutL from Ralstonia nicotianae (strain ATCC BAA-1114 / GMI1000) (Ralstonia solanacearum).